A 353-amino-acid chain; its full sequence is GTPase Obg (353 aa).

The 159-residue stretch at 1-159 (MKFLDEAKVY…RWIWLRLKLI (159 aa)) folds into the Obg domain. In terms of domain architecture, OBG-type G spans 160-327 (ADAGLVGLPN…ALRALVAVIG (168 aa)). GTP is bound by residues 166-173 (GLPNAGKS), 191-195 (FTTLH), 212-215 (DIPG), 279-282 (NKID), and 308-310 (SGV). Positions 173 and 193 each coordinate Mg(2+).

It belongs to the TRAFAC class OBG-HflX-like GTPase superfamily. OBG GTPase family. In terms of assembly, monomer. Requires Mg(2+) as cofactor.

Its subcellular location is the cytoplasm. Its function is as follows. An essential GTPase which binds GTP, GDP and possibly (p)ppGpp with moderate affinity, with high nucleotide exchange rates and a fairly low GTP hydrolysis rate. Plays a role in control of the cell cycle, stress response, ribosome biogenesis and in those bacteria that undergo differentiation, in morphogenesis control. The chain is GTPase Obg from Rhodopseudomonas palustris (strain ATCC BAA-98 / CGA009).